The chain runs to 603 residues: NADPH-dependent diflavin oxidoreductase 1 (603 aa).

Residues 10-155 enclose the Flavodoxin-like domain; the sequence is VTILYGSETG…YYSEWETNLL (146 aa). FMN contacts are provided by residues 16 to 21, 64 to 67, 102 to 111, and E137; these read SETGNA, STTG, and IGDSSYPKFN. Residues 209–451 form the FAD-binding FR-type domain; that stretch reads TNLLLGSVKA…HKSNLKFELP (243 aa). FAD is bound by residues R359, 390–393, and 422–425; these read RLFS and GLCT. Residues T465 and 521-522 contribute to the NADP(+) site; that span reads SR. W603 contacts FAD.

Belongs to the NADPH-dependent diflavin oxidoreductase NDOR1 family. It in the N-terminal section; belongs to the flavodoxin family. This sequence in the C-terminal section; belongs to the flavoprotein pyridine nucleotide cytochrome reductase family. As to quaternary structure, interacts with DRE2; as part of the cytosolic iron-sulfur (Fe-S) protein assembly (CIA) machinery. The cofactor is FAD. Requires FMN as cofactor.

The protein localises to the cytoplasm. Its subcellular location is the mitochondrion. It carries out the reaction 2 oxidized [2Fe-2S]-[protein] + NADPH = 2 reduced [2Fe-2S]-[protein] + NADP(+) + H(+). Its function is as follows. NADPH-dependent reductase which is a central component of the cytosolic iron-sulfur (Fe-S) protein assembly (CIA) machinery. Transfers electrons from NADPH via its FAD and FMN prosthetic groups to the [2Fe-2S] cluster of DRE2, another key component of the CIA machinery. In turn, this reduced cluster provides electrons for assembly of cytosolic iron-sulfur cluster proteins. Positively controls H(2)O(2)-induced cell death. In Debaryomyces hansenii (strain ATCC 36239 / CBS 767 / BCRC 21394 / JCM 1990 / NBRC 0083 / IGC 2968) (Yeast), this protein is NADPH-dependent diflavin oxidoreductase 1.